Consider the following 81-residue polypeptide: ATP synthase subunit c, chloroplastic (81 aa).

2 consecutive transmembrane segments (helical) span residues 7–27 and 57–77; these read AASVIAAGLAVGLASIGPGVG and LAFMEALTIYGLVVALALLFA.

It belongs to the ATPase C chain family. As to quaternary structure, F-type ATPases have 2 components, F(1) - the catalytic core - and F(0) - the membrane proton channel. F(1) has five subunits: alpha(3), beta(3), gamma(1), delta(1), epsilon(1). F(0) has four main subunits: a(1), b(1), b'(1) and c(10-14). The alpha and beta chains form an alternating ring which encloses part of the gamma chain. F(1) is attached to F(0) by a central stalk formed by the gamma and epsilon chains, while a peripheral stalk is formed by the delta, b and b' chains.

Its subcellular location is the plastid. It localises to the chloroplast thylakoid membrane. F(1)F(0) ATP synthase produces ATP from ADP in the presence of a proton or sodium gradient. F-type ATPases consist of two structural domains, F(1) containing the extramembraneous catalytic core and F(0) containing the membrane proton channel, linked together by a central stalk and a peripheral stalk. During catalysis, ATP synthesis in the catalytic domain of F(1) is coupled via a rotary mechanism of the central stalk subunits to proton translocation. In terms of biological role, key component of the F(0) channel; it plays a direct role in translocation across the membrane. A homomeric c-ring of between 10-14 subunits forms the central stalk rotor element with the F(1) delta and epsilon subunits. This Arabis hirsuta (Hairy rock-cress) protein is ATP synthase subunit c, chloroplastic.